The following is a 44-amino-acid chain: Small ribosomal subunit protein eS7 (44 aa).

A compositionally biased stretch (basic residues) spans 18–34; it reads KPTRKSRIKNKQKRPRS. A disordered region spans residues 18-44; that stretch reads KPTRKSRIKNKQKRPRSRTLTAVHDAI.

It belongs to the eukaryotic ribosomal protein eS7 family. As to quaternary structure, component of the small ribosomal subunit.

Its subcellular location is the cytoplasm. It localises to the cytoskeleton. It is found in the microtubule organizing center. The protein localises to the centrosome. The protein resides in the nucleus. Component of the small ribosomal subunit. The ribosome is a large ribonucleoprotein complex responsible for the synthesis of proteins in the cell. Required for rRNA maturation. In Salmo salar (Atlantic salmon), this protein is Small ribosomal subunit protein eS7 (rps7).